Here is a 1531-residue protein sequence, read N- to C-terminus: Nuclear factor of activated T-cells 5 (1531 aa).

Disordered stretches follow at residues 34–89 and 114–141; these read ELQL…TSSS and VSNR…RHTV. The span at 41–51 shows a compositional bias: polar residues; that stretch reads RETSVASMSQT. Low complexity predominate over residues 63–89; sequence VVAADASSAPSSSSMGGACSSFTTSSS. Ser-120 is subject to Phosphoserine. The residue at position 122 (Lys-122) is an N6-acetyllysine. The segment covering 122-134 has biased composition (polar residues); sequence KQLTSNTVQQHPS. Position 134 is a phosphoserine (Ser-134). Thr-135 carries the post-translational modification Phosphothreonine; by CDK5. The residue at position 155 (Ser-155) is a Phosphoserine. Disordered regions lie at residues 175–220 and 241–265; these read WMED…CEES and TTDN…GVKK. Positions 179–192 are enriched in low complexity; that stretch reads SPSNFSNMSTSSYN. Basic residues predominate over residues 200-212; sequence KSRKRNPKQRPGV. Residues 241–260 show a composition bias toward polar residues; sequence TTDNKGNSKAGNGTLENQKG. The 180-residue stretch at 264-443 folds into the RHD domain; sequence KKSPMLCGQY…SPILCTQPAG (180 aa). A DNA-binding region spans residues 293–300; it reads RARYLTEG. Lys-556 participates in a covalent cross-link: Glycyl lysine isopeptide (Lys-Gly) (interchain with G-Cter in SUMO1); alternate. A Glycyl lysine isopeptide (Lys-Gly) (interchain with G-Cter in SUMO2); alternate cross-link involves residue Lys-556. Ser-561 is subject to Phosphoserine. Glycyl lysine isopeptide (Lys-Gly) (interchain with G-Cter in SUMO2) cross-links involve residues Lys-573 and Lys-603. Disordered stretches follow at residues 640 to 666, 841 to 891, 958 to 996, 1211 to 1304, 1316 to 1371, and 1473 to 1502; these read NIAG…QQIQ, VSPG…QVME, PPAV…TGTQ, PQVA…QEQQ, APMN…QEQQ, and ISQP…SPLA. Over residues 646–656 the composition is skewed to low complexity; that stretch reads SFSSPSSSHLP. Composition is skewed to polar residues over residues 841-852 and 869-878; these read VSPGMFSSTEPT and HPQSENTLSN. Low complexity-rich tracts occupy residues 879 to 888 and 960 to 980; these read QQQQQQQQQQ and AVSG…PGTT. 2 stretches are compositionally biased toward polar residues: residues 981–996 and 1224–1247; these read MFQT…TGTQ and PQSQ…NSPS. Over residues 1248-1266 the composition is skewed to low complexity; sequence QEQQQQQQQQQQQQQQQQQ. Composition is skewed to polar residues over residues 1267 to 1278 and 1291 to 1304; these read SILFSNQNTMAT and FNPN…QEQQ. The segment covering 1320–1330 has biased composition (low complexity); the sequence is QEQQPMQFQSQ. Residues 1331-1371 show a composition bias toward polar residues; that stretch reads STVSSLQNPGPTQSESSQTPLFHSSPQIQLVQGSPSSQEQQ. A compositionally biased stretch (low complexity) spans 1475–1486; the sequence is QPGQPQNEGQPP. Positions 1487–1502 are enriched in polar residues; that stretch reads VTTLLSQQMPENSPLA.

In terms of assembly, homodimer when bound to DNA, completely encircles its DNA target. Interacts with CIDEC; this interaction is direct and retains NFAT5 in the cytoplasm. Does not bind with Fos and Jun transcription factors. Interacts with DDX5 and DDX17; this interaction leads to DDX5/DDX17 recruitment to LNC2 and S100A4 promoters and NFAT5-mediated DDX5/DDX17-enhanced transactivation. In terms of processing, phosphorylated. Phosphorylated at Thr-135 by CDK5 in response to osmotic stress; this phosphorylation mediates its rapid nuclear localization. Poly-ADP-ribosylated by PARP1 in response to DNA damage, promoting recruitment to sites of R-loop-associated DNA damage. Widely expressed, with highest levels in skeletal muscle, brain, heart and peripheral blood leukocytes.

It is found in the nucleus. Its subcellular location is the cytoplasm. The protein localises to the chromosome. Transcription factor involved, among others, in the transcriptional regulation of osmoprotective and inflammatory genes. Binds the DNA consensus sequence 5'-[ACT][AG]TGGAAA[CAT]A[TA][ATC][CA][ATG][GT][GAC][CG][CT]-3'. Mediates the transcriptional response to hypertonicity. Positively regulates the transcription of LCN2 and S100A4 genes; optimal transactivation of these genes requires the presence of DDX5/DDX17. Also involved in the DNA damage response by preventing formation of R-loops; R-loops are composed of a DNA:RNA hybrid and the associated non-template single-stranded DNA. This Homo sapiens (Human) protein is Nuclear factor of activated T-cells 5.